The primary structure comprises 238 residues: Proteasome subunit beta type-6 (238 aa).

Alanine 2 is modified (N-acetylalanine). A propeptide spans 2–33 (removed in mature form); it reads AAALAVRGAVSAPAFGPEALTPDWENREVSTG. Residue threonine 34 is the Nucleophile of the active site. Threonine 68 bears the Phosphothreonine mark.

It belongs to the peptidase T1B family. The 26S proteasome consists of a 20S proteasome core and two 19S regulatory subunits. The 20S proteasome core is a barrel-shaped complex made of 28 subunits that are arranged in four stacked rings. The two outer rings are each formed by seven alpha subunits, and the two inner rings are formed by seven beta subunits. The proteolytic activity is exerted by three beta-subunits PSMB5, PSMB6 and PSMB7.

The protein resides in the cytoplasm. It is found in the nucleus. It catalyses the reaction Cleavage of peptide bonds with very broad specificity.. Its function is as follows. Component of the 20S core proteasome complex involved in the proteolytic degradation of most intracellular proteins. This complex plays numerous essential roles within the cell by associating with different regulatory particles. Associated with two 19S regulatory particles, forms the 26S proteasome and thus participates in the ATP-dependent degradation of ubiquitinated proteins. The 26S proteasome plays a key role in the maintenance of protein homeostasis by removing misfolded or damaged proteins that could impair cellular functions, and by removing proteins whose functions are no longer required. Associated with the PA200 or PA28, the 20S proteasome mediates ubiquitin-independent protein degradation. This type of proteolysis is required in several pathways including spermatogenesis (20S-PA200 complex) or generation of a subset of MHC class I-presented antigenic peptides (20S-PA28 complex). Within the 20S core complex, PSMB6 displays a peptidylglutamyl-hydrolyzing activity also termed postacidic or caspase-like activity, meaning that the peptides bond hydrolysis occurs directly after acidic residues. This is Proteasome subunit beta type-6 (Psmb6) from Rattus norvegicus (Rat).